A 531-amino-acid chain; its full sequence is MGIQGFLQKLSGLLLLLCALPWAEGGKVLVFPMEGSHWLSIRDVVRELHARGHQAVVLAPEVTVHIKEEDFFTLQTYPVPYTKEEYRHHLLGHLQNFFETEFSLKLVLQTMAAVNNVSTFYVRSCRGLLHNTALIQSLNSSSFDVVLTDPFFPCGAVLAMYLRVPAVFFLQSMLCELEFEATNSPNPSSYIPRLLTLNSDHMSFLDRVKNMLYPVPWMYLCHVNYGSLARLASDLLQREVSVVEILRHASVWLLRKDFVFHYPRPFMPNMVFIGGINCANRKPLSQEFEAYVNASGEHGIVVFSLGSMVSEIPEKKAMEIAEALGRIPQTLLWRYTGTRPSNLAKNTILVKWLPQNDLLGHPKARAFITHSGSHGIYEGICNGVPMVMMPLFGDQMDNAKRMETRGAGVTLNVLEMTADDLENALKTVINNKSYKENIMRLSSLHKDRPIEPLDLAVFWVEYVMRHKGAPHLRPAAHDLTWYQYHSLDVIGFLLAIVLTVVFIVYKSCAYGCRKCFGGKGRVKKSHKSKTH.

The signal sequence occupies residues 1 to 25; the sequence is MGIQGFLQKLSGLLLLLCALPWAEG. Asn-116, Asn-139, Asn-293, and Asn-431 each carry an N-linked (GlcNAc...) asparagine glycan. A helical membrane pass occupies residues 489–505; the sequence is VIGFLLAIVLTVVFIVY.

It belongs to the UDP-glycosyltransferase family. In terms of assembly, homodimers. Homooligomer. Interacts with UGT1A1, UGT1A4, UGT1A6, UGT1A7, UGT1A8, UGT1A9 and UGT1A10 to form heterodimers.

Its subcellular location is the endoplasmic reticulum membrane. It carries out the reaction glucuronate acceptor + UDP-alpha-D-glucuronate = acceptor beta-D-glucuronoside + UDP + H(+). The enzyme catalyses 17beta-estradiol + UDP-alpha-D-glucuronate = 17beta-estradiol 3-O-(beta-D-glucuronate) + UDP + H(+). It catalyses the reaction 17beta-estradiol + UDP-alpha-D-glucuronate = 17beta-estradiol 17-O-(beta-D-glucuronate) + UDP + H(+). The catalysed reaction is 17alpha-estradiol + UDP-alpha-D-glucuronate = 17alpha-estradiol 3-O-(beta-D-glucuronate) + UDP + H(+). It carries out the reaction estrone + UDP-alpha-D-glucuronate = estrone 3-O-(beta-D-glucuronate) + UDP + H(+). The enzyme catalyses chenodeoxycholate + UDP-alpha-D-glucuronate = chenodeoxycholoyl-24-O-(beta-D-glucuronate) + UDP. It catalyses the reaction deoxycholate + UDP-alpha-D-glucuronate = deoxycholoyl-24-O-(beta-D-glucuronate) + UDP. The catalysed reaction is lithocholate + UDP-alpha-D-glucuronate = lithocholoyl-24-O-(beta-D-glucuronate) + UDP. It carries out the reaction hyodeoxycholate + UDP-alpha-D-glucuronate = hyodeoxycholoyl-24-O-(beta-D-glucuronate) + UDP. The enzyme catalyses hyocholate + UDP-alpha-D-glucuronate = hyocholoyl-24-O-(beta-D-glucuronate) + UDP. It catalyses the reaction calcidiol + UDP-alpha-D-glucuronate = calcidiol 25-O-(beta-D-glucuronide) + UDP + H(+). The catalysed reaction is losartan + UDP-alpha-D-glucuronate = losartan-2-N-beta-D-glucuronide + UDP. It carries out the reaction candesartan + UDP-alpha-D-glucuronate = candesartan-2-N-beta-D-glucuronide + UDP. The enzyme catalyses zolasartan + UDP-alpha-D-glucuronate = zolarsartan-2-N-beta-D-glucuronide + UDP. It catalyses the reaction (E)-ferulate + UDP-alpha-D-glucuronate = (E)-4-O-(beta-D-glucuronosyl)-ferulate + UDP + H(+). The catalysed reaction is (E)-ferulate + UDP-alpha-D-glucuronate = (E)-ferulic acid beta-D-glucuronate ester + UDP. UDP-glucuronosyltransferase (UGT) that catalyzes phase II biotransformation reactions in which lipophilic substrates are conjugated with glucuronic acid to increase the metabolite's water solubility, thereby facilitating excretion into either the urine or bile. Essential for the elimination and detoxification of drugs, xenobiotics and endogenous compounds. Catalyzes the glucuronidation of endogenous estrogen hormones such as estradiol and estrone. Contributes to bile acid (BA) detoxification by catalyzing the glucuronidation of BA substrates, which are natural detergents for dietary lipids absorption. Involved in the glucuronidation of calcidiol, which is the major circulating form of vitamin D3, essential for the regulation of calcium and phosphate homeostasis. Involved in the glucuronidation of the phytochemical ferulic acid at the phenolic or the carboxylic acid group. Involved in the glucuronidation of the AGTR1 angiotensin receptor antagonists losartan, candesartan and zolarsartan, which can inhibit the effect of angiotensin II. The polypeptide is UDP-glucuronosyltransferase 1A3 (Rattus norvegicus (Rat)).